Consider the following 702-residue polypeptide: Polyribonucleotide nucleotidyltransferase (702 aa).

Residues Asp-485 and Asp-491 each contribute to the Mg(2+) site. Residues 552–611 (PRITTLKINPEKIRDVIGKGGATIRALTEETGTTIELEDDGTVKIASANGEATKEAIRRI) enclose the KH domain. The S1 motif domain occupies 621-689 (GTVYNGKVVR…RQGRVRLSMK (69 aa)).

Belongs to the polyribonucleotide nucleotidyltransferase family. Component of the RNA degradosome, which is a multiprotein complex involved in RNA processing and mRNA degradation. The cofactor is Mg(2+).

It is found in the cytoplasm. The catalysed reaction is RNA(n+1) + phosphate = RNA(n) + a ribonucleoside 5'-diphosphate. Its function is as follows. Involved in mRNA degradation. Catalyzes the phosphorolysis of single-stranded polyribonucleotides processively in the 3'- to 5'-direction. The chain is Polyribonucleotide nucleotidyltransferase from Shewanella woodyi (strain ATCC 51908 / MS32).